Reading from the N-terminus, the 1458-residue chain is ABC multidrug transporter B (1458 aa).

The next 5 helical transmembrane spans lie at 30–50 (FSLL…VLII), 70–90 (LLWA…VLAV), 102–122 (ASIA…LLSC), 128–148 (STTP…FDIA), and 165–185 (IAIL…LEAV). N208 carries N-linked (GlcNAc...) asparagine glycosylation. The chain crosses the membrane as a helical span at residues 273 to 295 (WPLLSAVPPRACLAALNFCQPLL). The 279-residue stretch at 283–561 (ACLAALNFCQ…LVMALMTFVG (279 aa)) folds into the ABC transmembrane type-1 1 domain. N-linked (GlcNAc...) asparagine glycosylation is present at N309. 5 helical membrane passes run 314–334 (IGYG…VTMG), 387–407 (WQTI…IYLL), 411–431 (LGVA…GCLI), 501–521 (LGWT…YGIM), and 541–561 (LFAL…TFVG). Residues 626–853 (LTVKNATFAW…AGGYVSSFGL (228 aa)) enclose the ABC transporter 1 domain. N-linked (GlcNAc...) asparagine glycosylation is present at N630. 660–667 (GPSGCGKS) serves as a coordination point for ATP. Residues N702, N804, and N879 are each glycosylated (N-linked (GlcNAc...) asparagine). An ABC transmembrane type-1 2 domain is found at 933 to 1182 (PNGRTGYYLG…LVTFWTNLET (250 aa)). 6 consecutive transmembrane segments (helical) span residues 940–960 (YLGI…IGCW), 978–998 (LLAT…SGSI), 1016–1036 (AAIN…LMGI), 1040–1060 (YAAI…KVYL), 1125–1145 (LTLT…VLVV), and 1156–1176 (VGVA…LVTF). The 231-residue stretch at 1219-1449 (IEFKSVSAEY…EGSYFSRLYA (231 aa)) folds into the ABC transporter 2 domain. 1252–1259 (GRTGSGKT) is an ATP binding site. Residue N1316 is glycosylated (N-linked (GlcNAc...) asparagine).

The protein belongs to the ABC transporter superfamily. ABCC family. Conjugate transporter (TC 3.A.1.208) subfamily.

The protein localises to the cell membrane. In terms of biological role, pleiotropic ABC efflux transporter that may be involved in A.fumigatus adaptation to azoles such as vorizonazole. In Aspergillus fumigatus (strain ATCC MYA-4609 / CBS 101355 / FGSC A1100 / Af293) (Neosartorya fumigata), this protein is ABC multidrug transporter B.